Here is a 495-residue protein sequence, read N- to C-terminus: MSSACRSLMVVGTSSHVGKTLLVAALCRLLKKAGKKVAPFKAQNMSLNAYVTPEGHEIAYAQALQAWAAGIPPAVEMNPILLKPQGNLTSQVVLNGVAVDTCRAGEYYERWFAPAWEAVKTALARLQQQYEWIICEGAGSPAEVNLKHRDLANTRVALHLGSPTWLVADIDRGGALAHVVGTLQLLEPAERALIRGIVINKFRGARELLQPGLDWLENYTGIPVVGVLPWLDWVLPQEDSMGLEAGPQLWENRRERAGRGSCLEIAVIRLPQVANFSDFDPLLAEPSVHLRWVHPGQSLGSPDVVILPGSKTTLKDLLALQKTGLADQLRLYSGHIVGICGGLQMLGQTIADPAGLEGVAGTYPGLGFLPLTTVLQPTKVTQQVQTQSRWPAPAPVQGYEIHQGSTQADPAGCLPIFEQEGLGWRDPTGRVWGSYLHGLFDNHRWRRHWLNELRRQKGWDPLPELEGHYAQQREELLDCLAEAWRPHLEWQQLLE.

The region spanning 262 to 445 is the GATase cobBQ-type domain; that stretch reads CLEIAVIRLP…LHGLFDNHRW (184 aa). Catalysis depends on Cys-340, which acts as the Nucleophile. His-437 is a catalytic residue.

The protein belongs to the CobB/CobQ family. CobQ subfamily.

The protein operates within cofactor biosynthesis; adenosylcobalamin biosynthesis. Functionally, catalyzes amidations at positions B, D, E, and G on adenosylcobyrinic A,C-diamide. NH(2) groups are provided by glutamine, and one molecule of ATP is hydrogenolyzed for each amidation. This chain is Cobyric acid synthase, found in Synechococcus sp. (strain JA-3-3Ab) (Cyanobacteria bacterium Yellowstone A-Prime).